We begin with the raw amino-acid sequence, 390 residues long: tRNA(Met) cytidine acetate ligase (390 aa).

ATP is bound by residues 7–20 (VVEY…HKLH), Gly-101, Asn-162, and Arg-187.

The protein belongs to the TmcAL family.

Its subcellular location is the cytoplasm. It carries out the reaction cytidine(34) in elongator tRNA(Met) + acetate + ATP = N(4)-acetylcytidine(34) in elongator tRNA(Met) + AMP + diphosphate. Its function is as follows. Catalyzes the formation of N(4)-acetylcytidine (ac(4)C) at the wobble position of elongator tRNA(Met), using acetate and ATP as substrates. First activates an acetate ion to form acetyladenylate (Ac-AMP) and then transfers the acetyl group to tRNA to form ac(4)C34. This is tRNA(Met) cytidine acetate ligase from Listeria monocytogenes serotype 4b (strain F2365).